We begin with the raw amino-acid sequence, 276 residues long: Cytoskeleton protein RodZ (276 aa).

Over 1–110 (MTSMRKKTIG…SSKKKKKKTS (110 aa)) the chain is Cytoplasmic. Residues 111–131 (FLPLFYFILFALSILIFVTYY) traverse the membrane as a helical; Signal-anchor for type II membrane protein segment. The Extracellular portion of the chain corresponds to 132 to 276 (VWNYIQTQPE…GQITVTFTKN (145 aa)).

Belongs to the RodZ family. Interacts with MltG and MreC in the elongasome. Interacts with KhpB (also called EloR/Jag).

The protein localises to the cell membrane. Its function is as follows. Cytoskeletal protein that is involved in cell-shape control through regulation of the length of the long axis. Probably part of the elongasome which synthesizes peripheral peptidoglycan. This Streptococcus pneumoniae (strain ATCC BAA-255 / R6) protein is Cytoskeleton protein RodZ.